The primary structure comprises 566 residues: Oxygen-dependent choline dehydrogenase (566 aa).

An FAD-binding site is contributed by 7-36 (DYIICGAGSAGNVLATRLTEDPNVTVLLLE). The tract at residues 185-204 (EGFGPMDRTVTPKGRRASTA) is disordered. The active-site Proton acceptor is histidine 474.

This sequence belongs to the GMC oxidoreductase family. FAD is required as a cofactor.

The enzyme catalyses choline + A = betaine aldehyde + AH2. The catalysed reaction is betaine aldehyde + NAD(+) + H2O = glycine betaine + NADH + 2 H(+). It functions in the pathway amine and polyamine biosynthesis; betaine biosynthesis via choline pathway; betaine aldehyde from choline (cytochrome c reductase route): step 1/1. Its function is as follows. Involved in the biosynthesis of the osmoprotectant glycine betaine. Catalyzes the oxidation of choline to betaine aldehyde and betaine aldehyde to glycine betaine at the same rate. This Burkholderia vietnamiensis (strain G4 / LMG 22486) (Burkholderia cepacia (strain R1808)) protein is Oxygen-dependent choline dehydrogenase.